Consider the following 314-residue polypeptide: GTPase-interacting component 1 (314 aa).

3 disordered regions span residues Ser112–Val156, Thr199–Ser221, and Leu241–Gly261. In terms of domain architecture, CRIB spans Ile126–Asn139. The segment covering Gly140–Val156 has biased composition (basic and acidic residues). Over residues Glu208–Ser221 the composition is skewed to polar residues. Residues Pro251–Ser260 show a composition bias toward low complexity.

This sequence belongs to the BORG/CEP family. As to quaternary structure, interacts with GTP-bound CDC42.

The protein resides in the bud neck. The protein localises to the bud tip. Its subcellular location is the cytoplasm. It localises to the cell cortex. It is found in the cytoskeleton. In terms of biological role, required for cell size and shape control, bud site selection, bud emergence, actin cytoskeletal organization, mitotic spindle orientation/positioning, and mating projection formation in response to mating pheromone. In Saccharomyces cerevisiae (strain ATCC 204508 / S288c) (Baker's yeast), this protein is GTPase-interacting component 1 (GIC1).